The following is a 405-amino-acid chain: Acetylornithine aminotransferase 2 (405 aa).

Pyridoxal 5'-phosphate-binding positions include 105–106 and phenylalanine 138; that span reads GT. Arginine 141 is a N(2)-acetyl-L-ornithine binding site. Position 224–227 (224–227) interacts with pyridoxal 5'-phosphate; it reads DEVQ. Lysine 254 is modified (N6-(pyridoxal phosphate)lysine). Serine 282 serves as a coordination point for N(2)-acetyl-L-ornithine. Threonine 283 lines the pyridoxal 5'-phosphate pocket.

This sequence belongs to the class-III pyridoxal-phosphate-dependent aminotransferase family. ArgD subfamily. In terms of assembly, homodimer. Pyridoxal 5'-phosphate is required as a cofactor.

The protein localises to the cytoplasm. The catalysed reaction is N(2)-acetyl-L-ornithine + 2-oxoglutarate = N-acetyl-L-glutamate 5-semialdehyde + L-glutamate. The protein operates within amino-acid biosynthesis; L-arginine biosynthesis; N(2)-acetyl-L-ornithine from L-glutamate: step 4/4. This chain is Acetylornithine aminotransferase 2, found in Caulobacter vibrioides (strain ATCC 19089 / CIP 103742 / CB 15) (Caulobacter crescentus).